A 393-amino-acid polypeptide reads, in one-letter code: Elongation factor Tu (393 aa).

The 194-residue stretch at Lys10–Val203 folds into the tr-type G domain. A G1 region spans residues Gly19 to Thr26. Gly19–Thr26 lines the GTP pocket. Mg(2+) is bound at residue Thr26. The interval Gly60–Ser64 is G2. The segment at Asp81 to Gly84 is G3. GTP is bound by residues Asp81–His85 and Asn136–Asp139. A G4 region spans residues Asn136 to Asp139. Positions Ser173–Leu175 are G5.

This sequence belongs to the TRAFAC class translation factor GTPase superfamily. Classic translation factor GTPase family. EF-Tu/EF-1A subfamily. Monomer.

It is found in the cytoplasm. The catalysed reaction is GTP + H2O = GDP + phosphate + H(+). In terms of biological role, GTP hydrolase that promotes the GTP-dependent binding of aminoacyl-tRNA to the A-site of ribosomes during protein biosynthesis. The sequence is that of Elongation factor Tu from Prosthecochloris aestuarii (strain DSM 271 / SK 413).